The sequence spans 572 residues: Arginine--tRNA ligase (572 aa).

The 'HIGH' region signature appears at 122–132 (PNLAKEMHVGH).

The protein belongs to the class-I aminoacyl-tRNA synthetase family. In terms of assembly, monomer.

The protein resides in the cytoplasm. The enzyme catalyses tRNA(Arg) + L-arginine + ATP = L-arginyl-tRNA(Arg) + AMP + diphosphate. The sequence is that of Arginine--tRNA ligase from Neisseria meningitidis serogroup C / serotype 2a (strain ATCC 700532 / DSM 15464 / FAM18).